A 264-amino-acid chain; its full sequence is NADH-quinone oxidoreductase subunit B 1 (264 aa).

[4Fe-4S] cluster-binding residues include Cys42, Cys43, Cys108, and Cys138.

It belongs to the complex I 20 kDa subunit family. In terms of assembly, NDH-1 is composed of 14 different subunits. Subunits NuoB, C, D, E, F, and G constitute the peripheral sector of the complex. [4Fe-4S] cluster serves as cofactor.

The protein localises to the cell membrane. It carries out the reaction a quinone + NADH + 5 H(+)(in) = a quinol + NAD(+) + 4 H(+)(out). Its function is as follows. NDH-1 shuttles electrons from NADH, via FMN and iron-sulfur (Fe-S) centers, to quinones in the respiratory chain. The immediate electron acceptor for the enzyme in this species is believed to be ubiquinone. Couples the redox reaction to proton translocation (for every two electrons transferred, four hydrogen ions are translocated across the cytoplasmic membrane), and thus conserves the redox energy in a proton gradient. In Chloroflexus aurantiacus (strain ATCC 29366 / DSM 635 / J-10-fl), this protein is NADH-quinone oxidoreductase subunit B 1.